The chain runs to 398 residues: 1-deoxy-D-xylulose 5-phosphate reductoisomerase (398 aa).

The NADPH site is built by Thr10, Gly11, Ser12, Val13, Gly36, Arg37, Asn38, and Asn124. 1-deoxy-D-xylulose 5-phosphate is bound at residue Lys125. Glu126 serves as a coordination point for NADPH. Residue Asp150 participates in Mn(2+) binding. 1-deoxy-D-xylulose 5-phosphate contacts are provided by Ser151, Glu152, Ser186, and His209. Position 152 (Glu152) interacts with Mn(2+). Residue Gly215 coordinates NADPH. Positions 222, 227, 228, and 231 each coordinate 1-deoxy-D-xylulose 5-phosphate. Residue Glu231 participates in Mn(2+) binding.

It belongs to the DXR family. In terms of assembly, homodimer. It depends on Mg(2+) as a cofactor. Requires Mn(2+) as cofactor.

The enzyme catalyses 2-C-methyl-D-erythritol 4-phosphate + NADP(+) = 1-deoxy-D-xylulose 5-phosphate + NADPH + H(+). It participates in isoprenoid biosynthesis; isopentenyl diphosphate biosynthesis via DXP pathway; isopentenyl diphosphate from 1-deoxy-D-xylulose 5-phosphate: step 1/6. In terms of biological role, catalyzes the NADPH-dependent rearrangement and reduction of 1-deoxy-D-xylulose-5-phosphate (DXP) to 2-C-methyl-D-erythritol 4-phosphate (MEP). The polypeptide is 1-deoxy-D-xylulose 5-phosphate reductoisomerase (Serratia proteamaculans (strain 568)).